The sequence spans 393 residues: Protein TsgA (393 aa).

12 helical membrane passes run 11 to 31 (WISFLSYALTGALVIVTGMVM), 51 to 71 (FLNAGILISIFLNAWLMEIIP), 78 to 98 (FGFILMVLAVAGLMFSHSLAL), 101 to 121 (AAMFVLGLVSGITMSIGTFLI), 134 to 154 (LLFTDSFFSMAGMIFPMVAAF), 162 to 182 (WYWVYACIGLVYLAIFILTFG), 206 to 226 (IGVLFLAVAALCYILGQLGFI), 245 to 265 (ALVSDFWMSYMFGMWAFSFIL), 273 to 293 (ILTVLAGMAAVLMYLFITGTQ), 298 to 318 (WFILTLGFFSSAIYTSIITLG), 332 to 352 (FILTCGTIGTMLTFVVTGPIV), and 361 to 381 (LLTANGLYAVVFVMCFALGFV).

It belongs to the major facilitator superfamily. TsgA family.

It is found in the cell inner membrane. In Salmonella agona (strain SL483), this protein is Protein TsgA.